We begin with the raw amino-acid sequence, 296 residues long: Small ribosomal subunit protein uS2 (296 aa).

Residues 245–296 (WEAPAAGFAGATGTGWDGAAGDEWGAAPATTEWAASAAPAAASGEAAKETTW) form a disordered region. The segment covering 263–289 (AAGDEWGAAPATTEWAASAAPAAASGE) has biased composition (low complexity).

It belongs to the universal ribosomal protein uS2 family. As to quaternary structure, component of the small ribosomal subunit. Mature ribosomes consist of a small (40S) and a large (60S) subunit. The 40S subunit contains about 33 different proteins and 1 molecule of RNA (18S). The 60S subunit contains about 49 different proteins and 3 molecules of RNA (25S, 5.8S and 5S). Interacts with RPS21.

The protein resides in the cytoplasm. Its function is as follows. Required for the assembly and/or stability of the 40S ribosomal subunit. Required for the processing of the 20S rRNA-precursor to mature 18S rRNA in a late step of the maturation of 40S ribosomal subunits. The sequence is that of Small ribosomal subunit protein uS2 from Fusarium vanettenii (strain ATCC MYA-4622 / CBS 123669 / FGSC 9596 / NRRL 45880 / 77-13-4) (Fusarium solani subsp. pisi).